A 454-amino-acid polypeptide reads, in one-letter code: Cobyrinate a,c-diamide synthase (454 aa).

The 196-residue stretch at 247-442 (KIGIAMDSAF…IHAHWASNPN (196 aa)) folds into the GATase cobBQ-type domain. The active-site Nucleophile is Cys-329.

It belongs to the CobB/CbiA family. Mg(2+) is required as a cofactor.

It catalyses the reaction cob(II)yrinate + 2 L-glutamine + 2 ATP + 2 H2O = cob(II)yrinate a,c diamide + 2 L-glutamate + 2 ADP + 2 phosphate + 2 H(+). The protein operates within cofactor biosynthesis; adenosylcobalamin biosynthesis; cob(II)yrinate a,c-diamide from sirohydrochlorin (anaerobic route): step 10/10. Catalyzes the ATP-dependent amidation of the two carboxylate groups at positions a and c of cobyrinate, using either L-glutamine or ammonia as the nitrogen source. The chain is Cobyrinate a,c-diamide synthase from Leptospira interrogans serogroup Icterohaemorrhagiae serovar Lai (strain 56601).